The following is a 212-amino-acid chain: ATP phosphoribosyltransferase (212 aa).

It belongs to the ATP phosphoribosyltransferase family. Short subfamily. Heteromultimer composed of HisG and HisZ subunits.

The protein resides in the cytoplasm. It catalyses the reaction 1-(5-phospho-beta-D-ribosyl)-ATP + diphosphate = 5-phospho-alpha-D-ribose 1-diphosphate + ATP. Its pathway is amino-acid biosynthesis; L-histidine biosynthesis; L-histidine from 5-phospho-alpha-D-ribose 1-diphosphate: step 1/9. In terms of biological role, catalyzes the condensation of ATP and 5-phosphoribose 1-diphosphate to form N'-(5'-phosphoribosyl)-ATP (PR-ATP). Has a crucial role in the pathway because the rate of histidine biosynthesis seems to be controlled primarily by regulation of HisG enzymatic activity. The sequence is that of ATP phosphoribosyltransferase from Prochlorococcus marinus (strain AS9601).